Here is a 343-residue protein sequence, read N- to C-terminus: Polyprenyl transferase spyF (343 aa).

The next 8 membrane-spanning stretches (helical) occupy residues W38–L58, V62–I82, L92–I112, G138–L158, L170–W190, A241–L261, S273–L293, and F311–M331.

This sequence belongs to the UbiA prenyltransferase family. Mg(2+) is required as a cofactor.

The protein resides in the membrane. The enzyme catalyses triacetate lactone + (2E,6E,10E)-geranylgeranyl diphosphate = (2E,6E,10E)-geranylgeranyl-triacetate lactone + diphosphate. Its pathway is secondary metabolite biosynthesis; terpenoid biosynthesis. In terms of biological role, polyprenyl transferase; part of the gene cluster that mediates the biosynthesis of meroterpenoids called sartorypyrones. Within the pathway, spyF catalyzes the prenylation of triacetic acid lactone (TAL) to produce geranylgeranyl-triacetate lactone. The biosynthesis of sartorypyrones begins with the production of triacetic acid lactone (TAL) by the NR-PKS spyA using one molecule of acetyl-CoA and two molecules of malonyl-CoA. The prenyltransferase spyF then conjugates geranylgeranyl pyrophosphate (GGPP) to TAL to form geranylgeranyl-triacetate lactone, for which the pathway-specific geranylgeranyl pyrophosphate synthase (GGPS) spyE is required to provide GGPP. Subsequently, geranylgeranyl-triacetate lactone is epoxidized at the terminal olein by the FAD-dependent monooxygenase spyC, followed by cyclization of the terpenoid component catalyzed by the terpene cyclase spyD to produce both the bicyclic sartorypyrone F and the monocyclic sartorypyrone D. Finally, the last step of the biosynthesis involves the acetylation of the meroterpenoids sartorypyrones D and F by the acetyltransferase SpyB to produce sartorypyrones A and G, respectively. This chain is Polyprenyl transferase spyF, found in Aspergillus fumigatus (strain ATCC MYA-4609 / CBS 101355 / FGSC A1100 / Af293) (Neosartorya fumigata).